We begin with the raw amino-acid sequence, 1009 residues long: UvrABC system protein A (1009 aa).

32-39 (GLSGSGKS) is an ATP binding site. 2 consecutive ABC transporter domains span residues 314–592 (WSHG…AESQ) and 612–941 (RDPS…KFLR). Residue 645-652 (GVSGSGKS) coordinates ATP. A C4-type zinc finger spans residues 744 to 770 (CENCSGDGTIKIEMNFLPDVYVPCEVC). Residues 956–1009 (KAPRKTAARKTAAAKSTTKKTATVRTTNNTATKKAAAVTKKTAPAKKTTRARKA) form a disordered region. The span at 964–997 (RKTAAAKSTTKKTATVRTTNNTATKKAAAVTKKT) shows a compositional bias: low complexity. A compositionally biased stretch (basic residues) spans 998–1009 (APAKKTTRARKA).

It belongs to the ABC transporter superfamily. UvrA family. As to quaternary structure, forms a heterotetramer with UvrB during the search for lesions.

The protein localises to the cytoplasm. In terms of biological role, the UvrABC repair system catalyzes the recognition and processing of DNA lesions. UvrA is an ATPase and a DNA-binding protein. A damage recognition complex composed of 2 UvrA and 2 UvrB subunits scans DNA for abnormalities. When the presence of a lesion has been verified by UvrB, the UvrA molecules dissociate. In Streptomyces avermitilis (strain ATCC 31267 / DSM 46492 / JCM 5070 / NBRC 14893 / NCIMB 12804 / NRRL 8165 / MA-4680), this protein is UvrABC system protein A.